The following is a 273-amino-acid chain: Rho GTPase-activating protein gacB (273 aa).

A Rho-GAP domain is found at 1–192 (MTDQTLRLEN…YLISHFNEIF (192 aa)).

It is found in the cytoplasm. Its function is as follows. Rho GTPase-activating protein involved in the signal transduction pathway. In Dictyostelium discoideum (Social amoeba), this protein is Rho GTPase-activating protein gacB (gacB).